A 485-amino-acid chain; its full sequence is AP2-like ethylene-responsive transcription factor TOE2 (485 aa).

Residues 124–135 (GDFIGSGSGGGD) show a composition bias toward gly residues. The tract at residues 124-161 (GDFIGSGSGGGDASRVMQPPSQPVKKSRRGPRSKSSQY) is disordered. Residues 160–216 (QYRGVTFYRRTGRWESHIWDCGKQVYLGGFDTAHAAARAYDRAAVKFRGLEADINFV) constitute a DNA-binding region (AP2/ERF).

It belongs to the AP2/ERF transcription factor family. AP2 subfamily.

Its subcellular location is the nucleus. In terms of biological role, probably acts as a transcriptional activator. Binds to the GCC-box pathogenesis-related promoter element. May be involved in the regulation of gene expression by stress factors and by components of stress signal transduction pathways. Regulates negatively the transition to flowering time and confers flowering time delay. The sequence is that of AP2-like ethylene-responsive transcription factor TOE2 (TOE2) from Arabidopsis thaliana (Mouse-ear cress).